The sequence spans 382 residues: Alkanesulfonate monooxygenase (382 aa).

This sequence belongs to the SsuD family. In terms of assembly, homotetramer.

It carries out the reaction an alkanesulfonate + FMNH2 + O2 = an aldehyde + FMN + sulfite + H2O + 2 H(+). Catalyzes the desulfonation of aliphatic sulfonates. In Yersinia pseudotuberculosis serotype IB (strain PB1/+), this protein is Alkanesulfonate monooxygenase.